A 72-amino-acid chain; its full sequence is Translation initiation factor IF-1 2 (72 aa).

One can recognise an S1-like domain in the interval 1–72 (MAKEDAIEVD…KRGRITYRMK (72 aa)).

This sequence belongs to the IF-1 family. In terms of assembly, component of the 30S ribosomal translation pre-initiation complex which assembles on the 30S ribosome in the order IF-2 and IF-3, IF-1 and N-formylmethionyl-tRNA(fMet); mRNA recruitment can occur at any time during PIC assembly.

The protein resides in the cytoplasm. Its function is as follows. One of the essential components for the initiation of protein synthesis. Stabilizes the binding of IF-2 and IF-3 on the 30S subunit to which N-formylmethionyl-tRNA(fMet) subsequently binds. Helps modulate mRNA selection, yielding the 30S pre-initiation complex (PIC). Upon addition of the 50S ribosomal subunit IF-1, IF-2 and IF-3 are released leaving the mature 70S translation initiation complex. In Nitratidesulfovibrio vulgaris (strain DP4) (Desulfovibrio vulgaris), this protein is Translation initiation factor IF-1 2.